The primary structure comprises 339 residues: Pre-mRNA-splicing factor syf2 (339 aa).

The segment at 1–136 (MPPEKKRKTE…LQSDPSQLTA (136 aa)) is disordered. Over residues 7-16 (RKTEPEDKAE) the composition is skewed to basic and acidic residues. Residues 17-37 (VTQQENDVAESTTEPNNQTVT) show a composition bias toward polar residues. The span at 45–93 (VTEAALATTSSSSPPVLSASETAQPDTAATSQSSSTPPTSTSAAESAAA) shows a compositional bias: low complexity. The segment covering 94-103 (KARERAERFR) has biased composition (basic and acidic residues). Positions 126-135 (RLQSDPSQLT) are enriched in polar residues.

It belongs to the SYF2 family. In terms of assembly, associated with the spliceosome.

The protein localises to the nucleus. Involved in pre-mRNA splicing. The chain is Pre-mRNA-splicing factor syf2 (msp-4) from Neurospora crassa (strain ATCC 24698 / 74-OR23-1A / CBS 708.71 / DSM 1257 / FGSC 987).